The sequence spans 430 residues: Serine--tRNA ligase (430 aa).

Threonine 237–glutamate 239 provides a ligand contact to L-serine. Arginine 268 to glutamate 270 serves as a coordination point for ATP. Glutamate 291 contacts L-serine. Glutamate 355–serine 358 provides a ligand contact to ATP. Position 391 (serine 391) interacts with L-serine.

Belongs to the class-II aminoacyl-tRNA synthetase family. Type-1 seryl-tRNA synthetase subfamily. As to quaternary structure, homodimer. The tRNA molecule binds across the dimer.

It is found in the cytoplasm. The catalysed reaction is tRNA(Ser) + L-serine + ATP = L-seryl-tRNA(Ser) + AMP + diphosphate + H(+). It catalyses the reaction tRNA(Sec) + L-serine + ATP = L-seryl-tRNA(Sec) + AMP + diphosphate + H(+). It participates in aminoacyl-tRNA biosynthesis; selenocysteinyl-tRNA(Sec) biosynthesis; L-seryl-tRNA(Sec) from L-serine and tRNA(Sec): step 1/1. Its function is as follows. Catalyzes the attachment of serine to tRNA(Ser). Is also able to aminoacylate tRNA(Sec) with serine, to form the misacylated tRNA L-seryl-tRNA(Sec), which will be further converted into selenocysteinyl-tRNA(Sec). The chain is Serine--tRNA ligase from Citrobacter koseri (strain ATCC BAA-895 / CDC 4225-83 / SGSC4696).